Consider the following 120-residue polypeptide: NAD(P)H-quinone oxidoreductase subunit 3, chloroplastic (120 aa).

The next 3 helical transmembrane spans lie at 7–27, 64–84, and 88–108; these read YDTF…AFSI, MFAL…PWAM, and ILGL…IVGL.

It belongs to the complex I subunit 3 family. NDH is composed of at least 16 different subunits, 5 of which are encoded in the nucleus.

It is found in the plastid. It localises to the chloroplast thylakoid membrane. It carries out the reaction a plastoquinone + NADH + (n+1) H(+)(in) = a plastoquinol + NAD(+) + n H(+)(out). The enzyme catalyses a plastoquinone + NADPH + (n+1) H(+)(in) = a plastoquinol + NADP(+) + n H(+)(out). Its function is as follows. NDH shuttles electrons from NAD(P)H:plastoquinone, via FMN and iron-sulfur (Fe-S) centers, to quinones in the photosynthetic chain and possibly in a chloroplast respiratory chain. The immediate electron acceptor for the enzyme in this species is believed to be plastoquinone. Couples the redox reaction to proton translocation, and thus conserves the redox energy in a proton gradient. The chain is NAD(P)H-quinone oxidoreductase subunit 3, chloroplastic from Cryptomeria japonica (Japanese cedar).